We begin with the raw amino-acid sequence, 909 residues long: Protein virilizer (909 aa).

Residues 746–784 (STSKNTNTNVSKQQQQPQNSTPCSSNRFLFNKSSLISQE) show a composition bias toward polar residues. The segment at 746-824 (STSKNTNTNV…TNMTRQPTTL (79 aa)) is disordered. Low complexity predominate over residues 785 to 799 (SNGSNNNSGTQGPGS). A compositionally biased stretch (polar residues) spans 800 to 810 (MNESYSLDNSF). Residues 811 to 824 (NTTNTNMTRQPTTL) are compositionally biased toward low complexity. A phosphoserine mark is found at Ser856 and Ser898.

This sequence belongs to the vir family. In terms of assembly, component of the MIS (mRNA N6-methyladenosine (m6A) methylation) complex, at least composed of IME4, KAR4, MUM2, SLZ1, and VIR1. Interacts with KAR4. Interacts with SLZ1. Interacts with MUM2. Interacts with IME4.

It is found in the cytoplasm. It localises to the nucleus. The protein localises to the nucleolus. In terms of biological role, component of the MIS complex, a complex that mediates N6-methyladenosine (m6A) methylation of meiotic mRNAs and is required for initiation of meiosis, progression through the meiotic divisions and sporulation. In the complex, performs a scaffolding role stabilizing the other complex members. The protein is Protein virilizer of Saccharomyces cerevisiae (strain ATCC 204508 / S288c) (Baker's yeast).